A 265-amino-acid chain; its full sequence is Undecaprenyl-diphosphatase (265 aa).

8 consecutive transmembrane segments (helical) span residues 1-21, 39-59, 83-103, 114-134, 144-164, 188-208, 218-238, and 244-264; these read MDWF…FLPI, QGLA…MMYY, LKLG…GFLG, ALVI…SDAF, LGVA…IPGT, SFLL…KDLI, MMAL…VFFI, and VGML…LFWL.

Belongs to the UppP family.

It is found in the cell inner membrane. The catalysed reaction is di-trans,octa-cis-undecaprenyl diphosphate + H2O = di-trans,octa-cis-undecaprenyl phosphate + phosphate + H(+). Catalyzes the dephosphorylation of undecaprenyl diphosphate (UPP). Confers resistance to bacitracin. The protein is Undecaprenyl-diphosphatase of Alcanivorax borkumensis (strain ATCC 700651 / DSM 11573 / NCIMB 13689 / SK2).